Consider the following 105-residue polypeptide: Large ribosomal subunit protein uL24 (105 aa).

Belongs to the universal ribosomal protein uL24 family. Part of the 50S ribosomal subunit.

Functionally, one of two assembly initiator proteins, it binds directly to the 5'-end of the 23S rRNA, where it nucleates assembly of the 50S subunit. In terms of biological role, one of the proteins that surrounds the polypeptide exit tunnel on the outside of the subunit. The chain is Large ribosomal subunit protein uL24 from Leptothrix cholodnii (strain ATCC 51168 / LMG 8142 / SP-6) (Leptothrix discophora (strain SP-6)).